Here is a 192-residue protein sequence, read N- to C-terminus: A-type ATP synthase subunit E (192 aa).

This sequence belongs to the V-ATPase E subunit family. Has multiple subunits with at least A(3), B(3), C, D, E, F, H, I and proteolipid K(x).

The protein localises to the cell membrane. Its function is as follows. Component of the A-type ATP synthase that produces ATP from ADP in the presence of a proton gradient across the membrane. This is A-type ATP synthase subunit E from Methanocorpusculum labreanum (strain ATCC 43576 / DSM 4855 / Z).